Consider the following 647-residue polypeptide: MIKITFPDGAVREFESGVTTFEIAQSISNSLAKKALAGKFNGKLIDTTRAITEDGAIEIVTPDHEDALDILRHSAAHLFAQAARRLFPDIHLGVGPAIQDGFYYDTDNEAGQISNEDLPRIEEEMKKIVKENFPSIREEVTKDEAREIFKNDPYKLELIEEHSEDEGGLTIYRQSEYVDLCRGPHVPSTGRIQIFHLLNVAGAYWRGNSDNAMMQRVYGTAWFDKKDLKKYLQMREEAKERDHRKLGKELDLFMISQEVGQGLPFWLPNGATVRRELERYIVDKELASGYQHVYTPPLASVELYKTSGHWEHYQEDMFPTMDMGDGEEFVLRPMNCPHHIQVYKHHVHSYRELPIRIAEIGMMHRYEKSGALTGLQRVREMSLNDGHLFVTPEQIQEEFQRALQLIIDVYADFNLTEYRFRLSLRDPQDTHKYFDNDEMWENAQTMLRAALDEMGVDFFEAEGEAAFYGPKLDIQVKTALGNEETLSTIQLDFLLPERFDLKYVGADGEEHRPVMIHRGVISTMERFTAILIENYKGAFPTWLAPHQVTLIPVSNEAHIDYAWQVAKKLRDKGVRADVDERNEKMQYKIRASQTSKIPYQLIVGDKEVEDGTVNVRRYGQKETHTVAVDEFVEQILADIASKSRLEK.

Residues 1–61 (MIKITFPDGA…TEDGAIEIVT (61 aa)) form the TGS domain. Residues 242–540 (DHRKLGKELD…LIENYKGAFP (299 aa)) are catalytic. Cys-336, His-387, and His-517 together coordinate Zn(2+).

Belongs to the class-II aminoacyl-tRNA synthetase family. Homodimer. The cofactor is Zn(2+).

The protein localises to the cytoplasm. It carries out the reaction tRNA(Thr) + L-threonine + ATP = L-threonyl-tRNA(Thr) + AMP + diphosphate + H(+). In terms of biological role, catalyzes the attachment of threonine to tRNA(Thr) in a two-step reaction: L-threonine is first activated by ATP to form Thr-AMP and then transferred to the acceptor end of tRNA(Thr). Also edits incorrectly charged L-seryl-tRNA(Thr). This is Threonine--tRNA ligase from Streptococcus sanguinis (strain SK36).